A 335-amino-acid chain; its full sequence is Rho guanine nucleotide exchange factor 39 (335 aa).

The DH domain occupies 22 to 197; sequence KRACTARELL…SETAQRVHTI (176 aa). One can recognise a PH domain in the interval 227–331; that stretch reads WFLRQGWLLV…WYHSLTWAIS (105 aa).

Strongly expressed in hepatocellular carcinoma (HCC) compared with their non-cancerous counterparts.

Its subcellular location is the cell membrane. Functionally, promotes cell proliferation. The sequence is that of Rho guanine nucleotide exchange factor 39 (ARHGEF39) from Homo sapiens (Human).